A 350-amino-acid chain; its full sequence is Neurogenic differentiation factor 1 (350 aa).

The disordered stretch occupies residues 1–91 (MTKSYSEESM…KKKKMTKARM (91 aa)). The segment covering 7 to 18 (EESMMLESQSSS) has biased composition (low complexity). The span at 22–38 (DKCHSSSQDERDVDKTS) shows a compositional bias: basic and acidic residues. Residues 44–72 (DMEDDDDAGLNRLEDEDDEEEEEEEEDGD) show a composition bias toward acidic residues. The span at 76–91 (PKRRGPKKKKMTKARM) shows a compositional bias: basic residues. Positions 82 to 88 (KKKKMTK) match the Nuclear localization signal motif. Residues 96–148 (MRRMKANARERNRMHGLNDALESLRKVVPCYSKTQKLSKIETLRLAKNYIWAL) form the bHLH domain.

In terms of assembly, efficient DNA binding requires dimerization with another bHLH protein. In the embryo, expressed broadly in a subset of primary neurons in the brain and spinal cord. At 28 hours post-fertilization (hpf), regions of expression include telencephalon, olfactory placode, epiphysis, cranial ganglia, acoustic ganglia, Rohon-Beard mechano-sensory neurons and motoneurons. In 2 day postembryonic brain, expressed in many brain regions but absent from subpallium, the ventral preoptic region, ventral thalamus and hypothalamus; sites of expression extend laterally from the ventricular proliferative regions and correspond to freshly determined cell populations. In adult, expressed in all tissues examined with highest levels in brain.

It is found in the cytoplasm. The protein resides in the nucleus. Its function is as follows. May act as a transcriptional activator. Differentiation factor required for neurogenesis. Acts as an upstream activator of isl1. This chain is Neurogenic differentiation factor 1, found in Danio rerio (Zebrafish).